Reading from the N-terminus, the 393-residue chain is S-adenosylmethionine synthase 1 (393 aa).

Glutamate 9 is a binding site for Mg(2+). Residue histidine 15 participates in ATP binding. Glutamate 43 contacts K(+). The L-methionine site is built by glutamate 56 and glutamine 99. Residues 167–169, 235–238, aspartate 246, 252–253, alanine 269, lysine 273, and lysine 277 each bind ATP; these read DGK, SGRF, and RK. An L-methionine-binding site is contributed by aspartate 246. Lysine 277 lines the L-methionine pocket.

It belongs to the AdoMet synthase family. In terms of assembly, homotetramer. The cofactor is Mn(2+). It depends on Mg(2+) as a cofactor. Co(2+) serves as cofactor. K(+) is required as a cofactor. In terms of tissue distribution, mostly expressed in stems.

The protein resides in the cytoplasm. It carries out the reaction L-methionine + ATP + H2O = S-adenosyl-L-methionine + phosphate + diphosphate. The protein operates within amino-acid biosynthesis; S-adenosyl-L-methionine biosynthesis; S-adenosyl-L-methionine from L-methionine: step 1/1. Functionally, catalyzes the formation of S-adenosylmethionine from methionine and ATP. The reaction comprises two steps that are both catalyzed by the same enzyme: formation of S-adenosylmethionine (AdoMet) and triphosphate, and subsequent hydrolysis of the triphosphate. In Solanum lycopersicum (Tomato), this protein is S-adenosylmethionine synthase 1 (SAM1).